The sequence spans 91 residues: MPRSVWKGPFCDNYVIKLARRARGNPNVLIKIRSRRSVILPAFVGYTFGVYNGKVFIPVKVNENMVGHKFGEFSPTRTFNGHSGDRKVNKK.

This sequence belongs to the universal ribosomal protein uS19 family.

Protein S19 forms a complex with S13 that binds strongly to the 16S ribosomal RNA. This Neorickettsia sennetsu (strain ATCC VR-367 / Miyayama) (Ehrlichia sennetsu) protein is Small ribosomal subunit protein uS19.